Reading from the N-terminus, the 722-residue chain is Probable carboxypeptidase X1 (722 aa).

Positions 1 to 20 (MWGLLLAVTAFAPSVGLGLG) are cleaved as a signal peptide. The tract at residues 30–54 (APGSTLAPHSSVAQPSTKANETSER) is disordered. Polar residues predominate over residues 36 to 49 (APHSSVAQPSTKAN). N-linked (GlcNAc...) asparagine glycans are attached at residues Asn49, Asn200, Asn210, and Asn307. Residues 103–263 (PGCPPLGLES…PCLRAEILAC (161 aa)) form the F5/8 type C domain. A disulfide bond links Cys105 and Cys263. Residues 287–610 (RHHNYKAMRK…DALLTYLEQV (324 aa)) enclose the Peptidase M14 domain. Zn(2+) contacts are provided by His349 and Glu352. Asn461 carries an N-linked (GlcNAc...) asparagine glycan. Zn(2+) is bound at residue His487. Glu580 functions as the Proton donor/acceptor in the catalytic mechanism.

The protein belongs to the peptidase M14 family. Zn(2+) serves as cofactor. In terms of tissue distribution, strongly expressed in testis and spleen. Moderately expressed in salivary gland, brain, heart, lung, and kidney. Extremely low expression in liver and muscle. No expression in eye, adrenal, and white adipose tissues.

It localises to the secreted. In terms of biological role, may be involved in cell-cell interactions. No carboxypeptidase activity was found yet. In Mus musculus (Mouse), this protein is Probable carboxypeptidase X1 (Cpxm1).